An 877-amino-acid chain; its full sequence is MGSSKWGVLFGLLILHVIGYSIFLKGFFPSKVVVPGFNEFHTGQSPFMEHNEAKFDKLILMVVDAMRSDFLYSDHSHMKFVHQLINENCALPFTSYSNPPTVTLPRLKGITTGGTPSFLDAILNIADDKDNSQSLLNQDSWLHQFQNNSKVFNFFGDDTWLKLFPPEKFFNQYEGTNSFFVNDFTDVDNNVTRHLNDDLFNSKWDALILHYLGLDHIGHKGGPNSIFMRGKQEEMDGIIEKLYKETIDSNTLLVVMGDHGMNEIGNHGGSSMGETNPGLLFASPKFKMLKKNLKSPLAYNNDYKYYNYINQIDLVPTLATLLNFPIPKNNLGIVIKDILGLWKPEAQKSILMENSEQFMNIYEAKHANDTDIINEWKKSQDSGSIDVHYDFLSKIQGLLTSAATEYKYVDIYIGLSILVAMAIVAFGLFNWYFLVQATINPKYNWYFIGISIVYSIHFHASSLIEEEYQIWWFFSIICLFALYFNNHLKSLKYFWLILVGLRIIRSWSITGQKFTTPYTFSAYLLQNVDLLWVLNIATYFLTAILIYSQGSLIHCVTLREYESLRENVKDFGSLVTFIVTFVTCSISFSFKLCQYFNDGKRVPDWLLAFLNWTCESYGITIDPKEKNQLHELNIHLSKILFYCIGVLIIVRIVLGKIRKLHYGLLTDLSNVLTLFLLHQSRPEIVPIFLIFSLVKFSAAKLLANNEIVLRKNIDQLMIIITLFSLCMQNLSFFSMGNTNSLATVDLSNSYNGFKSYDVFLVGVLTYCSNFAGPIFWSLASLQLIFENNVVCFDTKKSSKDLVNLKFLKYQILYVKSLAGFLFYSMAGLSLVASCFNLRFHLFIWSVFSPKLLFFASWTLLTNILIDTISSLSILALC.

Residues Asn-190 and Asn-368 are each glycosylated (N-linked (GlcNAc...) asparagine). Helical transmembrane passes span 409–429, 443–463, 464–484, 528–548, and 570–590; these read VDIYIGLSILVAMAIVAFGLF, YNWYFIGISIVYSIHFHASSL, IEEEYQIWWFFSIICLFALYF, VDLLWVLNIATYFLTAILIYS, and DFGSLVTFIVTFVTCSISFSF. Asn-611 carries N-linked (GlcNAc...) asparagine glycosylation. The next 6 membrane-spanning stretches (helical) occupy residues 634-654, 683-703, 716-736, 758-778, 817-837, and 854-876; these read IHLSKILFYCIGVLIIVRIVL, EIVPIFLIFSLVKFSAAKLLA, LMIIITLFSLCMQNLSFFSMG, VFLVGVLTYCSNFAGPIFWSL, LAGFLFYSMAGLSLVASCFNL, and FASWTLLTNILIDTISSLSILAL.

This sequence belongs to the PIGG/PIGN/PIGO family. PIGG subfamily.

Its subcellular location is the endoplasmic reticulum membrane. Its pathway is glycolipid biosynthesis; glycosylphosphatidylinositol-anchor biosynthesis. Functionally, ethanolamine phosphate transferase involved in glycosylphosphatidylinositol-anchor biosynthesis. Transfers ethanolamine phosphate to the GPI second mannose. This is GPI ethanolamine phosphate transferase 2 (LAS21) from Debaryomyces hansenii (strain ATCC 36239 / CBS 767 / BCRC 21394 / JCM 1990 / NBRC 0083 / IGC 2968) (Yeast).